Consider the following 1162-residue polypeptide: MMCQKFYVVLLHWEFLYVIAALNLAYPISPWKFKLFCGPPNTTDDSFLSPAGAPNNASALKGASEAIVEAKFNSSGIYVPELSKTVFHCCFGNEQGQNCSALTDNTEGKTLASVVKASVFRQLGVNWDIECWMKGDLTLFICHMEPLPKNPFKNYDSKVHLLYDLPEVIDDSPLPPLKDSFQTVQCNCSLRGCECHVPVPRAKLNYALLMYLEITSAGVSFQSPLMSLQPMLVVKPDPPLGLHMEVTDDGNLKISWDSQTMAPFPLQYQVKYLENSTIVREAAEIVSATSLLVDSVLPGSSYEVQVRSKRLDGSGVWSDWSSPQVFTTQDVVYFPPKILTSVGSNASFHCIYKNENQIISSKQIVWWRNLAEKIPEIQYSIVSDRVSKVTFSNLKATRPRGKFTYDAVYCCNEQACHHRYAELYVIDVNINISCETDGYLTKMTCRWSPSTIQSLVGSTVQLRYHRRSLYCPDSPSIHPTSEPKNCVLQRDGFYECVFQPIFLLSGYTMWIRINHSLGSLDSPPTCVLPDSVVKPLPPSNVKAEITVNTGLLKVSWEKPVFPENNLQFQIRYGLSGKEIQWKTHEVFDAKSKSASLLVSDLCAVYVVQVRCRRLDGLGYWSNWSSPAYTLVMDVKVPMRGPEFWRKMDGDVTKKERNVTLLWKPLTKNDSLCSVRRYVVKHRTAHNGTWSEDVGNRTNLTFLWTEPAHTVTVLAVNSLGASLVNFNLTFSWPMSKVSAVESLSAYPLSSSCVILSWTLSPDDYSLLYLVIEWKILNEDDGMKWLRIPSNVKKFYIHDNFIPIEKYQFSLYPVFMEGVGKPKIINGFTKDAIDKQQNDAGLYVIVPIIISSCVLLLGTLLISHQRMKKLFWDDVPNPKNCSWAQGLNFQKPETFEHLFTKHAESVIFGPLLLEPEPISEEISVDTAWKNKDEMVPAAMVSLLLTTPDPESSSICISDQCNSANFSGSQSTQVTCEDECQRQPSVKYATLVSNDKLVETDEEQGFIHSPVSNCISSNHSPLRQSFSSSSWETEAQTFFLLSDQQPTMISPQLSFSGLDELLELEGSFPEENHREKSVCYLGVTSVNRRESGVLLTGEAGILCTFPAQCLFSDIRILQERCSHFVENNLSLGTSGENFVPYMPQFQTCSTHSHKIMENKMCDLTV.

The N-terminal stretch at 1–21 is a signal peptide; the sequence is MMCQKFYVVLLHWEFLYVIAA. Residues 22–839 are Extracellular-facing; the sequence is LNLAYPISPW…AIDKQQNDAG (818 aa). Cystine bridges form between cysteine 37–cysteine 90, cysteine 89–cysteine 99, cysteine 131–cysteine 142, cysteine 186–cysteine 195, and cysteine 188–cysteine 193. Asparagine 41, asparagine 56, asparagine 73, and asparagine 98 each carry an N-linked (GlcNAc...) asparagine glycan. Asparagine 187 carries N-linked (GlcNAc...) asparagine glycosylation. One can recognise a Fibronectin type-III 1 domain in the interval 238–331; sequence PPLGLHMEVT…SPQVFTTQDV (94 aa). Residues asparagine 275 and asparagine 345 are each glycosylated (N-linked (GlcNAc...) asparagine). The Ig-like domain maps to 329–427; the sequence is QDVVYFPPKI…HRYAELYVID (99 aa). 2 cysteine pairs are disulfide-bonded: cysteine 350–cysteine 410 and cysteine 411–cysteine 416. N-linked (GlcNAc...) asparagine glycosylation occurs at asparagine 431. Intrachain disulfides connect cysteine 434–cysteine 445, cysteine 471–cysteine 526, and cysteine 486–cysteine 496. Residues 465 to 482 are leptin-binding; that stretch reads HRRSLYCPDSPSIHPTSE. Asparagine 514, asparagine 622, asparagine 657, asparagine 668, asparagine 686, asparagine 695, asparagine 698, and asparagine 726 each carry an N-linked (GlcNAc...) asparagine glycan. 3 Fibronectin type-III domains span residues 537-632, 637-729, and 738-832; these read PPSN…TLVM, PMRG…NLTF, and AVES…DAID. The WSXWS motif signature appears at 620–624; the sequence is WSNWS. A helical membrane pass occupies residues 840–860; that stretch reads LYVIVPIIISSCVLLLGTLLI. Over 861 to 1162 the chain is Cytoplasmic; that stretch reads SHQRMKKLFW…MENKMCDLTV (302 aa). The Box 1 motif motif lies at 869 to 877; that stretch reads FWDDVPNPK. Serine 880 carries the phosphoserine modification. A required for JAK2 activation region spans residues 891–896; that stretch reads ETFEHL. Positions 896 to 904 are required for STAT3 phosphorylation; that stretch reads LFTKHAESV. The residue at position 985 (tyrosine 985) is a Phosphotyrosine; by JAK2. Tyrosine 1077 carries the phosphotyrosine modification. Tyrosine 1138 is modified (phosphotyrosine; by JAK2).

This sequence belongs to the type I cytokine receptor family. Type 2 subfamily. As to quaternary structure, present as a mixture of monomers and dimers. The phosphorylated receptor binds a number of SH2 domain-containing proteins such as JAK2, STAT3, PTPN11, and SOCS3. Interaction with SOCS3 inhibits JAK/STAT signaling and MAPK cascade. In terms of processing, on ligand binding, phosphorylated on two conserved C-terminal tyrosine residues (isoform B only) by JAK2. Tyr-985 is required for complete binding and activation of PTPN11, ERK/FOS activation,for interaction with SOCS3 and SOCS3 mediated inhibition of leptin signaling. Phosphorylation on Tyr-1138 is required for STAT3 binding/activation. Phosphorylation of Tyr-1077 has a more accessory role. In terms of tissue distribution, isoform A: highest level of expression in lung and kidney, also present in heart, brain, spleen, liver, muscle, choroid plexus and hypothalamus. Isoform B: highest levels of expression in hypothalamus and lower levels in brain, testes and adipose tissue. Expressed by neurons of the parabrachial nucleus. Expressed by peripheral blood mononuclear cells and CD4(+) T-cells. Isoform E: expressed in adipose tissue, liver, hypothalamus, cerebral microvessels, heart, and testes.

Its subcellular location is the cell membrane. The protein localises to the basolateral cell membrane. The protein resides in the secreted. Functionally, receptor for hormone LEP/leptin. On ligand binding, mediates LEP central and peripheral effects through the activation of different signaling pathways such as JAK2/STAT3 and MAPK cascade/FOS. In the hypothalamus, LEP acts as an appetite-regulating factor that induces a decrease in food intake and an increase in energy consumption by inducing anorexinogenic factors and suppressing orexigenic neuropeptides, also regulates bone mass and secretion of hypothalamo-pituitary-adrenal hormones. In the periphery, increases basal metabolism, influences reproductive function, regulates pancreatic beta-cell function and insulin secretion, is pro-angiogenic and affects innate and adaptive immunity. Control of energy homeostasis and melanocortin production (stimulation of POMC and full repression of AgRP transcription) is mediated by STAT3 signaling, whereas distinct signals regulate NPY and the control of fertility, growth and glucose homeostasis. Involved in the regulation of counter-regulatory response to hypoglycemia by inhibiting neurons of the parabrachial nucleus. Has a specific effect on T lymphocyte responses, differentially regulating the proliferation of naive and memory T-cells. Leptin increases Th1 and suppresses Th2 cytokine production. Its function is as follows. May transport LEP across the blood-brain barrier. Binds LEP and mediates LEP endocytosis. Does not induce phosphorylation of and activate STAT3. Antagonizes Isoform A and isoform B-mediated LEP binding and endocytosis. This Mus musculus (Mouse) protein is Leptin receptor (Lepr).